Consider the following 333-residue polypeptide: MKGEAGHMLHNEKSKQEGYIWGSMRRTAFILGSGLLSFVAFWNSVTWHLQRFWGASGYFWQAQWERLLTTFEGKEWILFFIGAIQVPCLFFWSFNGLLLVVDTTGKPNFISRYRIQVGKNEPVDPVKLRQSIRTVLFNQCMVSFPMVVFLYPFLKWWGDPCRRELPTFHWFLLELAIFTLIEEVLFYYSHRLLHHPTFYKKIHKKHHEWTAPIGVISLYAHPIEHVVSNMLPAIVGPLVMGSHLSSITMWFSLALIITTISHCGYHLPFLPSPEFHDYHHLKFNQCYGVLGVLDHLHGTDTMFKQTKAYEKHVLLLGFTPLSESIPDSPKRMQ.

6 helical membrane passes run 29-49 (FILGSGLLSFVAFWNSVTWHL), 77-97 (ILFFIGAIQVPCLFFWSFNGL), 134-154 (TVLFNQCMVSFPMVVFLYPFL), 168-188 (FHWFLLELAIFTLIEEVLFYY), 215-235 (VISLYAHPIEHVVSNMLPAIV), and 237-257 (PLVMGSHLSSITMWFSLALII). A Fatty acid hydroxylase domain is found at 176 to 299 (AIFTLIEEVL…LGVLDHLHGT (124 aa)).

The protein belongs to the sterol desaturase family.

The protein localises to the cytoplasm. The protein resides in the membrane. Its function is as follows. Promotes megakaryocyte differentiation by enhancing ERK phosphorylation and up-regulating RUNX1 expression. The protein is Fatty acid hydroxylase domain-containing protein 2 (FAXDC2) of Macaca fascicularis (Crab-eating macaque).